The sequence spans 337 residues: Cobalt-precorrin-5B C(1)-methyltransferase (337 aa).

It belongs to the CbiD family.

The catalysed reaction is Co-precorrin-5B + S-adenosyl-L-methionine = Co-precorrin-6A + S-adenosyl-L-homocysteine. It functions in the pathway cofactor biosynthesis; adenosylcobalamin biosynthesis; cob(II)yrinate a,c-diamide from sirohydrochlorin (anaerobic route): step 6/10. In terms of biological role, catalyzes the methylation of C-1 in cobalt-precorrin-5B to form cobalt-precorrin-6A. This Methanoculleus marisnigri (strain ATCC 35101 / DSM 1498 / JR1) protein is Cobalt-precorrin-5B C(1)-methyltransferase.